The primary structure comprises 29 residues: ShK homolog Ask132958 (29 aa).

The ShKT domain maps to 1–29 (CENTISGCSRADCLLTHRKQGCQKTCGLC). Intrachain disulfides connect cysteine 1-cysteine 29, cysteine 8-cysteine 22, and cysteine 13-cysteine 26.

The protein belongs to the sea anemone type 1 potassium channel toxin family. Type 1a subfamily.

It localises to the secreted. The protein localises to the nematocyst. Its function is as follows. This peptide is similar to the potassium channel toxin ShK, but does not show activity on potassium channels. It appears that Lys-19, which is expected to occupy the pore of the channel, is not sufficiently accessible for binding, and therefore that this peptide must have a distinct functional role that does not involve potassium channels. It is noteworthy that this peptide is much more stable in the presence of trypsin, chymotrypsin and pepsin than the toxin ShK. This is ShK homolog Ask132958 from Anemonia sulcata (Mediterranean snakelocks sea anemone).